The primary structure comprises 77 residues: Conotoxin VnMKLT1-012 (77 aa).

The signal sequence occupies residues Met1 to Ala22. Residues Asp23–Ile48 constitute a propeptide that is removed on maturation. 3 disulfides stabilise this stretch: Cys51–Cys68, Cys58–Cys72, and Cys67–Cys76.

This sequence belongs to the conotoxin O1 superfamily. Expressed by the venom duct.

Its subcellular location is the secreted. In Conus ventricosus (Mediterranean cone), this protein is Conotoxin VnMKLT1-012.